Here is a 178-residue protein sequence, read N- to C-terminus: Flagellar transcriptional regulator FlhC (178 aa).

4 residues coordinate Zn(2+): cysteine 138, cysteine 141, cysteine 158, and cysteine 161.

This sequence belongs to the FlhC family. As to quaternary structure, heterohexamer composed of two FlhC and four FlhD subunits. Each FlhC binds a FlhD dimer, forming a heterotrimer, and a hexamer assembles by dimerization of two heterotrimers. Zn(2+) serves as cofactor.

Its subcellular location is the cytoplasm. Its function is as follows. Functions in complex with FlhD as a master transcriptional regulator that regulates transcription of several flagellar and non-flagellar operons by binding to their promoter region. Activates expression of class 2 flagellar genes, including fliA, which is a flagellum-specific sigma factor that turns on the class 3 genes. Also regulates genes whose products function in a variety of physiological pathways. This chain is Flagellar transcriptional regulator FlhC, found in Erwinia tasmaniensis (strain DSM 17950 / CFBP 7177 / CIP 109463 / NCPPB 4357 / Et1/99).